The primary structure comprises 65 residues: MPKMKTKKSAAKRFRIRAGGSIKRSQAFKRHILTKKTTKNKRQLRGMTVVHASDVASVRAMLPYA.

It belongs to the bacterial ribosomal protein bL35 family.

The protein is Large ribosomal subunit protein bL35 of Nitrosomonas eutropha (strain DSM 101675 / C91 / Nm57).